The primary structure comprises 1488 residues: Chromosome partition protein MukB (1488 aa).

34–41 is an ATP binding site; that stretch reads GGNGAGKS. 3 coiled-coil regions span residues 326-418, 444-472, and 509-602; these read LEAD…QYNQ, LDTFQAKEQEATEKLLSLEQKMSVAQTAH, and RHLA…RRAP. The flexible hinge stretch occupies residues 666–783; that stretch reads PGGAEDQRLN…SLPIFGRAAR (118 aa). Coiled-coil stretches lie at residues 835-923, 977-1116, and 1209-1265; these read EAEI…AKLE, EMLS…AKAG, and VEAI…LQSV. A disordered region spans residues 1049–1074; the sequence is ADSGAEERARQRRDELHAQLSNNRSR. Positions 1051 to 1065 are enriched in basic and acidic residues; sequence SGAEERARQRRDELH.

The protein belongs to the SMC family. MukB subfamily. As to quaternary structure, homodimerization via its hinge domain. Binds to DNA via its C-terminal region. Interacts, and probably forms a ternary complex, with MukE and MukF via its C-terminal region. The complex formation is stimulated by calcium or magnesium. Interacts with tubulin-related protein FtsZ.

The protein resides in the cytoplasm. The protein localises to the nucleoid. Its function is as follows. Plays a central role in chromosome condensation, segregation and cell cycle progression. Functions as a homodimer, which is essential for chromosome partition. Involved in negative DNA supercoiling in vivo, and by this means organize and compact chromosomes. May achieve or facilitate chromosome segregation by condensation DNA from both sides of a centrally located replisome during cell division. In Salmonella heidelberg (strain SL476), this protein is Chromosome partition protein MukB.